Consider the following 217-residue polypeptide: Ribosomal RNA small subunit methyltransferase G (217 aa).

S-adenosyl-L-methionine is bound by residues G79, L84, 102 to 104 (DST), 130 to 131 (VE), and R144.

It belongs to the methyltransferase superfamily. RNA methyltransferase RsmG family.

Its subcellular location is the cytoplasm. In terms of biological role, specifically methylates the N7 position of a guanine in 16S rRNA. The chain is Ribosomal RNA small subunit methyltransferase G from Chlorobaculum tepidum (strain ATCC 49652 / DSM 12025 / NBRC 103806 / TLS) (Chlorobium tepidum).